The sequence spans 846 residues: SLIT and NTRK-like protein 2 (846 aa).

The first 21 residues, 1-21 (MLSGVWFLSVLTVAGILQTES), serve as a signal peptide directing secretion. The Extracellular segment spans residues 22-622 (RKTAKDICKI…LHTEVPLSVL (601 aa)). Intrachain disulfides connect cysteine 29–cysteine 35 and cysteine 33–cysteine 46. 6 LRR repeats span residues 63–84 (RIYQ…EFVN), 87–108 (NAVT…AFSG), 111–132 (TLKR…TFLG), 135–156 (SLEY…AFSK), 159–180 (KLKV…VFRF), and 182–203 (LLTH…GVLE). Asparagine 84 is a glycosylation site (N-linked (GlcNAc...) asparagine). The segment at 167-215 (DNLLLSLPSNVFRFVLLTHLDLRGNRLKVMPFAGVLEHIGGIMEIQLEE) is required for interaction with PTPRD. The LRRCT 1 domain maps to 216 to 265 (NPWNCTCDLLPLKAWLDTITVFVGEIVCETPFRLHGKDVTQLTRQDLCPR). A glycan (N-linked (GlcNAc...) asparagine) is linked at asparagine 219. Intrachain disulfides connect cysteine 220–cysteine 243 and cysteine 222–cysteine 263. The tract at residues 261 to 322 (DLCPRKSASG…TPRVTVSKDR (62 aa)) is disordered. Composition is skewed to low complexity over residues 267-276 (SASGDSSQRS) and 285-300 (RLTP…TRAP). The LRRNT domain maps to 332–374 (QTKSPVALTCPSSCVCTSQSSDNGLNVNCQERKFTNISDLQPK). 6 LRR repeats span residues 377–398 (SPKK…DLLE), 401–422 (SLDL…AFTN), 425–446 (SLRR…MFDG), 449–470 (SLQY…TFDA), 473–494 (NLQL…IFGG), and 496–517 (ALTR…GVLD). Asparagine 422 carries an N-linked (GlcNAc...) asparagine glycan. The LRRCT 2 domain occupies 530–581 (NPWDCTCDIMGLKDWTEHANSPVIINEVTCESPAKHAGEILKFLGREAICPE). The helical transmembrane segment at 623-643 (ILGLLVVFILSVCFGAGLFVF) threads the bilayer. At 644 to 846 (VLKRRKGVPN…LEKQTAISQL (203 aa)) the chain is on the cytoplasmic side. Position 757 is a phosphotyrosine (tyrosine 757).

The protein belongs to the SLITRK family. Interacts with PTPRD; this interaction is PTPRD splicing-dependent and may induce pre-synaptic differentiation. Interacts with NTRK2. As to expression, in the adult, significant expression is detected only in the brain. Broadly expressed in embryonic brain with highest expression in ventricular layer, subventricular zone, cortical plate, pyramidal layer of hippocampus, subicular neuroepithelium, thalamus, hypothalamus and spinal cord.

It localises to the membrane. The protein localises to the cell membrane. It is found in the cell projection. The protein resides in the dendrite. Functionally, it is involved in synaptogenesis. Promotes excitatory synapse differentiation. Suppresses neurite outgrowth. Involved in the negative regulation of NTRK2. This chain is SLIT and NTRK-like protein 2 (Slitrk2), found in Mus musculus (Mouse).